The following is a 456-amino-acid chain: Bifunctional protein GlmU (456 aa).

The tract at residues 1 to 228 (MPQNTLNIVI…SYLAAGVNNK (228 aa)) is pyrophosphorylase. UDP-N-acetyl-alpha-D-glucosamine is bound by residues 11–14 (LAAG), Lys25, Gln75, 80–81 (GT), 102–104 (YGD), Gly138, Glu153, Asn168, and Asn226. Asp104 serves as a coordination point for Mg(2+). Asn226 lines the Mg(2+) pocket. A linker region spans residues 229–249 (LQLAELERIFQTEQAQELLKA). The interval 250–456 (GVTLSDPARF…GWVRPEKDKQ (207 aa)) is N-acetyltransferase. UDP-N-acetyl-alpha-D-glucosamine-binding residues include Arg332 and Lys350. The Proton acceptor role is filled by His362. UDP-N-acetyl-alpha-D-glucosamine is bound by residues Tyr365 and Asn376. Acetyl-CoA is bound by residues Ala379, 385–386 (NY), Ser404, Ala422, and Arg439.

This sequence in the N-terminal section; belongs to the N-acetylglucosamine-1-phosphate uridyltransferase family. It in the C-terminal section; belongs to the transferase hexapeptide repeat family. Homotrimer. Mg(2+) is required as a cofactor.

It localises to the cytoplasm. The catalysed reaction is alpha-D-glucosamine 1-phosphate + acetyl-CoA = N-acetyl-alpha-D-glucosamine 1-phosphate + CoA + H(+). The enzyme catalyses N-acetyl-alpha-D-glucosamine 1-phosphate + UTP + H(+) = UDP-N-acetyl-alpha-D-glucosamine + diphosphate. Its pathway is nucleotide-sugar biosynthesis; UDP-N-acetyl-alpha-D-glucosamine biosynthesis; N-acetyl-alpha-D-glucosamine 1-phosphate from alpha-D-glucosamine 6-phosphate (route II): step 2/2. It participates in nucleotide-sugar biosynthesis; UDP-N-acetyl-alpha-D-glucosamine biosynthesis; UDP-N-acetyl-alpha-D-glucosamine from N-acetyl-alpha-D-glucosamine 1-phosphate: step 1/1. It functions in the pathway bacterial outer membrane biogenesis; LPS lipid A biosynthesis. In terms of biological role, catalyzes the last two sequential reactions in the de novo biosynthetic pathway for UDP-N-acetylglucosamine (UDP-GlcNAc). The C-terminal domain catalyzes the transfer of acetyl group from acetyl coenzyme A to glucosamine-1-phosphate (GlcN-1-P) to produce N-acetylglucosamine-1-phosphate (GlcNAc-1-P), which is converted into UDP-GlcNAc by the transfer of uridine 5-monophosphate (from uridine 5-triphosphate), a reaction catalyzed by the N-terminal domain. The protein is Bifunctional protein GlmU of Neisseria meningitidis serogroup C / serotype 2a (strain ATCC 700532 / DSM 15464 / FAM18).